Here is a 399-residue protein sequence, read N- to C-terminus: Argininosuccinate synthase (399 aa).

ATP is bound by residues 10–18 (AYSGGVDTS) and A38. Y89 contacts L-citrulline. G119 contributes to the ATP binding site. L-aspartate-binding residues include T121, N125, and D126. N125 is a binding site for L-citrulline. L-citrulline contacts are provided by R129, S177, S186, E262, and Y274.

This sequence belongs to the argininosuccinate synthase family. Type 1 subfamily. In terms of assembly, homotetramer.

It localises to the cytoplasm. It carries out the reaction L-citrulline + L-aspartate + ATP = 2-(N(omega)-L-arginino)succinate + AMP + diphosphate + H(+). The protein operates within amino-acid biosynthesis; L-arginine biosynthesis; L-arginine from L-ornithine and carbamoyl phosphate: step 2/3. The polypeptide is Argininosuccinate synthase (Acaryochloris marina (strain MBIC 11017)).